A 113-amino-acid chain; its full sequence is MALEAQMTLRMFVLVAMASTVHVLSSSFSEDLGTVPLSKVFRSETRFTLIQSLRALLSRQLEAEVHQPEIGHPGFSDETSSRTGKRGGLGRCIHNCMNSRGGLNFIQCKTMCS.

The first 21 residues, 1 to 21 (MALEAQMTLRMFVLVAMASTV), serve as a signal peptide directing secretion. Positions 22–86 (HVLSSSFSED…DETSSRTGKR (65 aa)) are excised as a propeptide.

The protein belongs to the teretoxin N (TN) superfamily. In terms of processing, contains 2 disulfide bonds. In terms of tissue distribution, expressed by the venom duct.

The protein resides in the secreted. This chain is Teretoxin Tan14.1, found in Terebra anilis (Auger snail).